We begin with the raw amino-acid sequence, 471 residues long: Glutamate--tRNA ligase (471 aa).

A 'HIGH' region motif is present at residues 10-20 (PSPTGFLHIGG). The disordered stretch occupies residues 117–137 (GRPPRYDGRWRDRPASERPTD). A 'KMSKS' region motif is present at residues 239 to 243 (KLSKR). Lys-242 provides a ligand contact to ATP.

Belongs to the class-I aminoacyl-tRNA synthetase family. Glutamate--tRNA ligase type 1 subfamily. Monomer.

The protein localises to the cytoplasm. The catalysed reaction is tRNA(Glu) + L-glutamate + ATP = L-glutamyl-tRNA(Glu) + AMP + diphosphate. In terms of biological role, catalyzes the attachment of glutamate to tRNA(Glu) in a two-step reaction: glutamate is first activated by ATP to form Glu-AMP and then transferred to the acceptor end of tRNA(Glu). This is Glutamate--tRNA ligase from Azorhizobium caulinodans (strain ATCC 43989 / DSM 5975 / JCM 20966 / LMG 6465 / NBRC 14845 / NCIMB 13405 / ORS 571).